Here is a 380-residue protein sequence, read N- to C-terminus: Glucose-1-phosphate adenylyltransferase (380 aa).

Residues glycine 164, 179-180 (EK), and serine 190 contribute to the alpha-D-glucose 1-phosphate site.

Belongs to the bacterial/plant glucose-1-phosphate adenylyltransferase family. In terms of assembly, homotetramer.

It carries out the reaction alpha-D-glucose 1-phosphate + ATP + H(+) = ADP-alpha-D-glucose + diphosphate. It participates in glycan biosynthesis; glycogen biosynthesis. In terms of biological role, involved in the biosynthesis of ADP-glucose, a building block required for the elongation reactions to produce glycogen. Catalyzes the reaction between ATP and alpha-D-glucose 1-phosphate (G1P) to produce pyrophosphate and ADP-Glc. This is Glucose-1-phosphate adenylyltransferase from Ligilactobacillus salivarius (strain UCC118) (Lactobacillus salivarius).